A 112-amino-acid chain; its full sequence is Nucleoid-associated protein FTH_1374 (112 aa).

The disordered stretch occupies residues 1-27 (MNFDMSKLMQQAQKMQEQMKKAQQERE). Residues 17-27 (EQMKKAQQERE) show a composition bias toward basic and acidic residues.

The protein belongs to the YbaB/EbfC family. In terms of assembly, homodimer.

It is found in the cytoplasm. It localises to the nucleoid. Functionally, binds to DNA and alters its conformation. May be involved in regulation of gene expression, nucleoid organization and DNA protection. In Francisella tularensis subsp. holarctica (strain OSU18), this protein is Nucleoid-associated protein FTH_1374.